Here is a 309-residue protein sequence, read N- to C-terminus: tRNA-cytidine(32) 2-sulfurtransferase (309 aa).

A PP-loop motif motif is present at residues 45–50; that stretch reads SGGKDS. Residues Cys120, Cys123, and Cys211 each contribute to the [4Fe-4S] cluster site.

Belongs to the TtcA family. As to quaternary structure, homodimer. Mg(2+) serves as cofactor. [4Fe-4S] cluster is required as a cofactor.

It is found in the cytoplasm. It carries out the reaction cytidine(32) in tRNA + S-sulfanyl-L-cysteinyl-[cysteine desulfurase] + AH2 + ATP = 2-thiocytidine(32) in tRNA + L-cysteinyl-[cysteine desulfurase] + A + AMP + diphosphate + H(+). The protein operates within tRNA modification. In terms of biological role, catalyzes the ATP-dependent 2-thiolation of cytidine in position 32 of tRNA, to form 2-thiocytidine (s(2)C32). The sulfur atoms are provided by the cysteine/cysteine desulfurase (IscS) system. In Psychromonas ingrahamii (strain DSM 17664 / CCUG 51855 / 37), this protein is tRNA-cytidine(32) 2-sulfurtransferase.